A 421-amino-acid chain; its full sequence is 5-hydroxytryptamine receptor 1A (421 aa).

Residues 1–38 (MDMFSLGQGNNTTTSLEPFGTGGNDTGLSNVTFSYQVI) lie on the Extracellular side of the membrane. N-linked (GlcNAc...) asparagine glycosylation is found at asparagine 10, asparagine 11, asparagine 24, and asparagine 30. A helical membrane pass occupies residues 39–59 (TSLLLGTLIFCAVLGNACVVA). The Cytoplasmic segment spans residues 60 to 73 (AIALERSLQNVANY). A helical membrane pass occupies residues 74–98 (LIGSLAVTDLMVSVLVLPMAALYQV). Over 99-107 (LNKWTLGQV) the chain is Extracellular. A helical transmembrane segment spans residues 108–132 (TCDLFIALDVLCCTSSILHLCAIAL). A disulfide bridge connects residues cysteine 109 and cysteine 187. Serotonin contacts are provided by aspartate 116 and cysteine 120. The short motif at 133–135 (DRY) is the DRY motif; important for ligand-induced conformation changes element. The Cytoplasmic segment spans residues 133-152 (DRYWAITDPIDYVNKRTPRR). The helical transmembrane segment at 153 to 174 (AAALISLTWLIGFLISIPPMLG) threads the bilayer. Residues 175 to 193 (WRTPEDRSNPNECTISKDH) lie on the Extracellular side of the membrane. Residues 194-216 (GYTIYSTFGAFYIPLLLMLVLYG) traverse the membrane as a helical segment. The Cytoplasmic portion of the chain corresponds to 217 to 346 (RIFRAARFRI…LARERKTVKT (130 aa)). The interval 237–268 (GAGTSFGTSSAPPPKKSLNGQPGSGDCRRSAE) is disordered. Positions 314, 345, 346, and 352 each coordinate 1D-myo-inositol 4-phosphate. A helical transmembrane segment spans residues 347–370 (LGIIMGTFILCWLPFFIVALVLPF). At 371-378 (CESSCHMP) the chain is on the extracellular side. Residues 379-403 (ELLGAIINWLGYSNSLLNPVIYAYF) form a helical membrane-spanning segment. Positions 396-400 (NPVIY) match the NPxxY motif; important for ligand-induced conformation changes and signaling motif. 1D-myo-inositol 4-phosphate-binding residues include phenylalanine 403, asparagine 404, and lysine 405. Residues 404-421 (NKDFQNAFKKIIKCKFCR) are Cytoplasmic-facing.

Belongs to the G-protein coupled receptor 1 family. 5-hydroxytryptamine receptor subfamily. HTR1A sub-subfamily. Heterodimer; heterodimerizes with GPER1. Interacts with YIF1B. Interacts with GPR39 and GALR1. Most abundantly expressed in midbrain, in dorsal raphe and hippocampus. Detected at lower levels in amygdala and brain cortex.

The protein localises to the cell membrane. It is found in the cell projection. It localises to the dendrite. G-protein coupled receptor activity is regulated by lipids: phosphatidylinositol 4-phosphate increases HTR1A-mediated activity. Plays a role in the regulation of dopamine and 5-hydroxytryptamine levels in the brain, and thereby affects neural activity, mood and behavior. Plays a role in the response to anxiogenic stimuli. Functionally, G-protein coupled receptor for 5-hydroxytryptamine (serotonin). Also functions as a receptor for various drugs and psychoactive substances. Ligand binding causes a conformation change that triggers signaling via guanine nucleotide-binding proteins (G proteins) and modulates the activity of downstream effectors, such as adenylate cyclase. HTR1A is coupled to G(i)/G(o) G alpha proteins and mediates inhibitory neurotransmission: signaling inhibits adenylate cyclase activity and activates a phosphatidylinositol-calcium second messenger system that regulates the release of Ca(2+) ions from intracellular stores. Beta-arrestin family members regulate signaling by mediating both receptor desensitization and resensitization processes. This chain is 5-hydroxytryptamine receptor 1A (Htr1a), found in Mus musculus (Mouse).